A 347-amino-acid chain; its full sequence is MMAGCGEIDHSINMLPTNRKANESCSNTAPSLTVPECAICLQTCVHPVSLPCKHVFCYLCVKGASWLGKRCALCRQEIPEDFLDKPTLLSPEELKAASRGNGEYAWYYEGRNGWWQYDERTSRELEDAFSKGKKSTEMLIAGFLYVADLENMVQYRRNEHGRRRKIKRDIIDIPKKGVAGLRLDCDANTVNLARESSADGADSVPAQSGASVQSSSVRPLTSVDGQLTSPATPSPDAGTSLEDSFAHLQLGGDSIAERSHRGEGEEEHESPSSGRVPAPDTSIEETESDASSDSEDVSALVAQHSLTQQRLLVPNPSQTVSDRSVAAGGTVSVRSRRPDGQCTVTEV.

An RING-type zinc finger spans residues 37–75 (CAICLQTCVHPVSLPCKHVFCYLCVKGASWLGKRCALCR). Residues Lys-85, Lys-95, Lys-131, and Lys-176 each participate in a glycyl lysine isopeptide (Lys-Gly) (interchain with G-Cter in ubiquitin) cross-link. Residues 92-168 (EELKAASRGN…EHGRRRKIKR (77 aa)) form the WWE domain. Disordered stretches follow at residues 196 to 241 (SSAD…GTSL) and 257 to 347 (ERSH…VTEV). Low complexity predominate over residues 203–217 (SVPAQSGASVQSSSV). Acidic residues predominate over residues 282–296 (SIEETESDASSDSED). Residues Ser-288 and Ser-292 each carry the phosphoserine modification. A compositionally biased stretch (polar residues) spans 304 to 322 (HSLTQQRLLVPNPSQTVSD).

In terms of assembly, interacts with poly-ADP-ribosylated AXIN1, AXIN2, BLZF1 and CASC3. Ubiquitinated; autoubiquitinated. Autoubiquitination is enhanced upon poly(ADP-ribose)-binding.

Its subcellular location is the cytoplasm. It localises to the cytosol. It carries out the reaction S-ubiquitinyl-[E2 ubiquitin-conjugating enzyme]-L-cysteine + [acceptor protein]-L-lysine = [E2 ubiquitin-conjugating enzyme]-L-cysteine + N(6)-ubiquitinyl-[acceptor protein]-L-lysine.. Its pathway is protein modification; protein ubiquitination. In terms of biological role, E3 ubiquitin-protein ligase that specifically binds poly-ADP-ribosylated proteins and mediates their ubiquitination and subsequent degradation. Acts as an activator of the Wnt signaling pathway by mediating the ubiquitination of poly-ADP-ribosylated AXIN1 and AXIN2, 2 key components of the beta-catenin destruction complex. Acts in cooperation with tankyrase proteins (TNKS and TNKS2), which mediate poly-ADP-ribosylation of target proteins AXIN1, AXIN2, BLZF1, CASC3, TNKS and TNKS2. Recognizes and binds tankyrase-dependent poly-ADP-ribosylated proteins via its WWE domain and mediates their ubiquitination. The chain is E3 ubiquitin-protein ligase RNF146-B (RNF146B) from Bos taurus (Bovine).